Here is a 333-residue protein sequence, read N- to C-terminus: Probable malate dehydrogenase 3 (333 aa).

An NAD(+)-binding site is contributed by 12–18; sequence GAAGQIA. The substrate site is built by Arg93 and Arg99. Residues Asn106, Gln113, and 130-132 each bind NAD(+); that span reads VGN. The substrate site is built by Asn132 and Arg163. His188 acts as the Proton acceptor in catalysis.

Belongs to the LDH/MDH superfamily. MDH type 2 family. In terms of assembly, homodimer.

The enzyme catalyses (S)-malate + NAD(+) = oxaloacetate + NADH + H(+). Its function is as follows. Catalyzes the reversible oxidation of malate to oxaloacetate. The sequence is that of Probable malate dehydrogenase 3 (mdhC) from Dictyostelium discoideum (Social amoeba).